The primary structure comprises 165 residues: UPF0303 protein Bphyt_1734 (165 aa).

It belongs to the UPF0303 family.

This Paraburkholderia phytofirmans (strain DSM 17436 / LMG 22146 / PsJN) (Burkholderia phytofirmans) protein is UPF0303 protein Bphyt_1734.